Here is a 253-residue protein sequence, read N- to C-terminus: Chitooligosaccharide deacetylase (253 aa).

Mg(2+) is bound by residues His-61 and His-126.

This sequence belongs to the YdjC deacetylase family. ChbG subfamily. As to quaternary structure, homodimer. Mg(2+) serves as cofactor.

The protein localises to the cytoplasm. The enzyme catalyses N,N'-diacetylchitobiose + H2O = N-acetyl-beta-D-glucosaminyl-(1-&gt;4)-D-glucosamine + acetate. It catalyses the reaction diacetylchitobiose-6'-phosphate + H2O = N'-monoacetylchitobiose-6'-phosphate + acetate. It functions in the pathway glycan degradation; chitin degradation. In terms of biological role, involved in the degradation of chitin. ChbG is essential for growth on the acetylated chitooligosaccharides chitobiose and chitotriose but is dispensable for growth on cellobiose and chitosan dimer, the deacetylated form of chitobiose. Deacetylation of chitobiose-6-P and chitotriose-6-P is necessary for both the activation of the chb promoter by the regulatory protein ChbR and the hydrolysis of phosphorylated beta-glucosides by the phospho-beta-glucosidase ChbF. Catalyzes the removal of only one acetyl group from chitobiose-6-P to yield monoacetylchitobiose-6-P, the inducer of ChbR and the substrate of ChbF. This Yersinia pestis bv. Antiqua (strain Angola) protein is Chitooligosaccharide deacetylase.